We begin with the raw amino-acid sequence, 450 residues long: Neutral protease 2 homolog AFUB_070680 (450 aa).

Positions 1–19 (MKITALASAILAVAQGALA) are cleaved as a signal peptide. The propeptide occupies 20-172 (LPARAPALDI…PASIKPLDRR (153 aa)). Intrachain disulfides connect cysteine 179-cysteine 251 and cysteine 258-cysteine 276. Zn(2+) is bound at residue histidine 300. The active site involves glutamate 301. Residues histidine 304 and aspartate 315 each coordinate Zn(2+). Residues 364–392 (QPGQTEPGTQTMWDGYSQPGQTEPGTQTM) show a composition bias toward polar residues. The segment at 364-416 (QPGQTEPGTQTMWDGYSQPGQTEPGTQTMWDGYSQPGQTEPGTQTTWDGYSQP) is disordered. Residues 398 to 409 (QPGQTEPGTQTT) are compositionally biased toward low complexity.

This sequence belongs to the peptidase M35 family. Zn(2+) serves as cofactor.

It localises to the secreted. It carries out the reaction Preferential cleavage of bonds with hydrophobic residues in P1'. Also 3-Asn-|-Gln-4 and 8-Gly-|-Ser-9 bonds in insulin B chain.. Secreted metalloproteinase that allows assimilation of proteinaceous substrates. Shows high activities on basic nuclear substrates such as histone and protamine. May be involved in virulence. The sequence is that of Neutral protease 2 homolog AFUB_070680 from Aspergillus fumigatus (strain ATCC MYA-4609 / CBS 101355 / FGSC A1100 / Af293) (Neosartorya fumigata).